A 221-amino-acid chain; its full sequence is UPF0502 protein PSPA7_1674 (221 aa).

It belongs to the UPF0502 family.

The chain is UPF0502 protein PSPA7_1674 from Pseudomonas paraeruginosa (strain DSM 24068 / PA7) (Pseudomonas aeruginosa (strain PA7)).